The primary structure comprises 381 residues: Queuine tRNA-ribosyltransferase (381 aa).

The active-site Proton acceptor is the aspartate 96. Residues 96–100, aspartate 150, glutamine 193, and glycine 220 each bind substrate; that span reads DSGGF. An RNA binding region spans residues 251–257; it reads GVGSPDS. The active-site Nucleophile is aspartate 270. Positions 275–279 are RNA binding; important for wobble base 34 recognition; that stretch reads TRIAR. Zn(2+)-binding residues include cysteine 308, cysteine 310, cysteine 313, and histidine 339.

This sequence belongs to the queuine tRNA-ribosyltransferase family. In terms of assembly, homodimer. Within each dimer, one monomer is responsible for RNA recognition and catalysis, while the other monomer binds to the replacement base PreQ1. Zn(2+) serves as cofactor.

The catalysed reaction is 7-aminomethyl-7-carbaguanine + guanosine(34) in tRNA = 7-aminomethyl-7-carbaguanosine(34) in tRNA + guanine. It functions in the pathway tRNA modification; tRNA-queuosine biosynthesis. Functionally, catalyzes the base-exchange of a guanine (G) residue with the queuine precursor 7-aminomethyl-7-deazaguanine (PreQ1) at position 34 (anticodon wobble position) in tRNAs with GU(N) anticodons (tRNA-Asp, -Asn, -His and -Tyr). Catalysis occurs through a double-displacement mechanism. The nucleophile active site attacks the C1' of nucleotide 34 to detach the guanine base from the RNA, forming a covalent enzyme-RNA intermediate. The proton acceptor active site deprotonates the incoming PreQ1, allowing a nucleophilic attack on the C1' of the ribose to form the product. After dissociation, two additional enzymatic reactions on the tRNA convert PreQ1 to queuine (Q), resulting in the hypermodified nucleoside queuosine (7-(((4,5-cis-dihydroxy-2-cyclopenten-1-yl)amino)methyl)-7-deazaguanosine). This chain is Queuine tRNA-ribosyltransferase, found in Bacillus pumilus (strain SAFR-032).